Reading from the N-terminus, the 96-residue chain is Small ribosomal subunit protein bS18 (96 aa).

Over residues 1–18 (MPPPRGKGRFGKDKRPKR) the composition is skewed to basic residues. The tract at residues 1–21 (MPPPRGKGRFGKDKRPKRNTQ) is disordered.

Belongs to the bacterial ribosomal protein bS18 family. Part of the 30S ribosomal subunit. Forms a tight heterodimer with protein bS6.

In terms of biological role, binds as a heterodimer with protein bS6 to the central domain of the 16S rRNA, where it helps stabilize the platform of the 30S subunit. In Methylibium petroleiphilum (strain ATCC BAA-1232 / LMG 22953 / PM1), this protein is Small ribosomal subunit protein bS18.